The following is a 299-amino-acid chain: Hemolysin C homolog (299 aa).

2 consecutive CBS domains span residues 80–142 (MVPR…NGRL) and 145–202 (LIRK…IDDE).

Belongs to the UPF0053 family. Hemolysin C subfamily.

The chain is Hemolysin C homolog (tlyC) from Rickettsia massiliae (strain Mtu5).